The following is a 337-amino-acid chain: MNKLLLLILFECIIFLSCSGKGSLESGIPKVSVIVNGTFDDKSFNESALNGIKKVKEEFKIELVLKESSTNSYLSDLEGLKDAGSNLIWLIGYRFSDVAKAVSLQNPEIKYAIIDPVYSEEPIPTNLVGMTFRAQEGAFLTGYIAAKVSKTGKIGFLGGIEGEIVDAFRYGYEAGAKYANKDIKISAHYIGSFNDVEAGRSVATKMYSDGIDIIHHAASLGGIGAIEVAKELGSGHYIIGVDEDQSYLAPNNIITSATKDVGRSLNIFTSNYLKTNTFEGGRLINYGLKEGVVGFVKNPKMIPFELEKEIDNLSSKIINQEIIVPYNKESYEKFLKE.

The signal sequence occupies residues 1-17 (MNKLLLLILFECIIFLS). The N-palmitoyl cysteine moiety is linked to residue Cys-18. The S-diacylglycerol cysteine moiety is linked to residue Cys-18.

It belongs to the BMP lipoprotein family. Monomer.

Its subcellular location is the cell inner membrane. Functionally, immunogenic protein. May be part of an ABC-type nucleoside uptake system involved in the purine salvage pathway. The sequence is that of Basic membrane protein A2 (bmpA2) from Borrelia garinii subsp. bavariensis (strain ATCC BAA-2496 / DSM 23469 / PBi) (Borreliella bavariensis).